The primary structure comprises 906 residues: Protein translocase subunit SecA (906 aa).

ATP is bound by residues glutamine 87, 105–109 (GEGKT), and aspartate 521. A compositionally biased stretch (low complexity) spans 849 to 865 (STATAAEPAPEASQSQS). Residues 849–897 (STATAAEPAPEASQSQSTNDATASQNPPITEVEASKVGRNQPCPCGSGK) form a disordered region. Residues 866–876 (TNDATASQNPP) are compositionally biased toward polar residues. The Zn(2+) site is built by cysteine 891, cysteine 893, cysteine 902, and cysteine 903.

The protein belongs to the SecA family. In terms of assembly, monomer and homodimer. Part of the essential Sec protein translocation apparatus which comprises SecA, SecYEG and auxiliary proteins SecDF-YajC and YidC. Zn(2+) serves as cofactor.

Its subcellular location is the cell inner membrane. It localises to the cytoplasm. It catalyses the reaction ATP + H2O + cellular proteinSide 1 = ADP + phosphate + cellular proteinSide 2.. In terms of biological role, part of the Sec protein translocase complex. Interacts with the SecYEG preprotein conducting channel. Has a central role in coupling the hydrolysis of ATP to the transfer of proteins into and across the cell membrane, serving both as a receptor for the preprotein-SecB complex and as an ATP-driven molecular motor driving the stepwise translocation of polypeptide chains across the membrane. This Dichelobacter nodosus (strain VCS1703A) protein is Protein translocase subunit SecA.